The chain runs to 258 residues: Steroid 5-alpha-reductase DET2 (258 aa).

6 helical membrane passes run 8-28, 49-69, 77-97, 109-129, 144-164, and 201-221; these read FHYC…SLYF, LAWF…FPSG, SFLL…LYPL, FPVS…YLQA, LFWW…WVNV, and IMEW…GFFL.

The protein belongs to the steroid 5-alpha reductase family. As to expression, accumulates in fibers (seed trichomes) during both their initiation and elongation phases. Also present in roots, hypocotyls, leaves, flowers and ovules, and barely in cotyledons.

The protein localises to the membrane. It carries out the reaction a 3-oxo-5alpha-steroid + NADP(+) = a 3-oxo-Delta(4)-steroid + NADPH + H(+). The protein operates within plant hormone biosynthesis; brassinosteroid biosynthesis. Functionally, involved in a reduction step in the biosynthesis of the plant steroid, brassinolide (BL). Promotes cotton fibers (seed trichomes) initiation and elongation. The protein is Steroid 5-alpha-reductase DET2 of Gossypium hirsutum (Upland cotton).